The chain runs to 395 residues: S-adenosylmethionine synthase (395 aa).

Histidine 16 serves as a coordination point for ATP. Aspartate 18 contributes to the Mg(2+) binding site. Residue glutamate 44 participates in K(+) binding. L-methionine is bound by residues glutamate 57 and glutamine 100. Residues 100-110 (QSPDIAQGVDR) are flexible loop. Residues 167 to 169 (DAK), 233 to 234 (RF), aspartate 242, 248 to 249 (RK), alanine 265, and lysine 269 contribute to the ATP site. Aspartate 242 contributes to the L-methionine binding site. Lysine 273 provides a ligand contact to L-methionine.

This sequence belongs to the AdoMet synthase family. As to quaternary structure, homotetramer; dimer of dimers. Requires Mg(2+) as cofactor. The cofactor is K(+).

The protein localises to the cytoplasm. The catalysed reaction is L-methionine + ATP + H2O = S-adenosyl-L-methionine + phosphate + diphosphate. It participates in amino-acid biosynthesis; S-adenosyl-L-methionine biosynthesis; S-adenosyl-L-methionine from L-methionine: step 1/1. Catalyzes the formation of S-adenosylmethionine (AdoMet) from methionine and ATP. The overall synthetic reaction is composed of two sequential steps, AdoMet formation and the subsequent tripolyphosphate hydrolysis which occurs prior to release of AdoMet from the enzyme. The sequence is that of S-adenosylmethionine synthase from Burkholderia mallei (strain NCTC 10247).